The primary structure comprises 615 residues: Medium-chain acyl-CoA ligase ACSF2, mitochondrial (615 aa).

The N-terminal 42 residues, 1 to 42 (MAVYVGMLRVARLCARSPRVLGARVGLSRVWQEARLWGVRPL), are a transit peptide targeting the mitochondrion. Lys-179 carries the N6-acetyllysine modification. Lys-182 bears the N6-acetyllysine; alternate mark. Lys-182 carries the N6-succinyllysine; alternate modification. N6-acetyllysine is present on Lys-199. 263 to 271 (TSGTTGSPK) contributes to the ATP binding site. Lys-340 and Lys-398 each carry N6-acetyllysine. Lys-478 carries the N6-succinyllysine modification. ATP-binding residues include Asp-493 and Arg-508. Lys-510 is subject to N6-acetyllysine. 2 positions are modified to N6-acetyllysine; alternate: Lys-544 and Lys-570. Lys-544 and Lys-570 each carry N6-succinyllysine; alternate. An ATP-binding site is contributed by Lys-599. Residue Lys-599 is modified to N6-succinyllysine.

This sequence belongs to the ATP-dependent AMP-binding enzyme family.

Its subcellular location is the mitochondrion. It catalyses the reaction a medium-chain fatty acid + ATP + CoA = a medium-chain fatty acyl-CoA + AMP + diphosphate. The catalysed reaction is octanoate + ATP + CoA = octanoyl-CoA + AMP + diphosphate. Acyl-CoA synthases catalyze the initial reaction in fatty acid metabolism, by forming a thioester with CoA. Has some preference toward medium-chain substrates. Plays a role in adipocyte differentiation. The protein is Medium-chain acyl-CoA ligase ACSF2, mitochondrial of Bos taurus (Bovine).